Here is a 648-residue protein sequence, read N- to C-terminus: RAF proto-oncogene serine/threonine-protein kinase (648 aa).

At S29 the chain carries Phosphoserine; by MAPK1. Position 43 is a phosphoserine (S43). Residues 56–131 (NTIRVFLPNK…IGEELQVDFL (76 aa)) enclose the RBD domain. The Phorbol-ester/DAG-type zinc-finger motif lies at 138 to 184 (THNFARKTFLKLAFCDICQKFLLNGFRCQTCGYKFHEHCSTKVPTMC). Residues H139, C152, C155, C165, C168, H173, C176, and C184 each contribute to the Zn(2+) site. Positions 217–335 (MRESVSRMPA…EKNKIRPRGQ (119 aa)) are disordered. At S233 the chain carries Phosphoserine; by PKA. Residues 239–271 (TFNTSSPSSEGSLSQRQRSTSTPNVHMVSTTLP) are compositionally biased toward polar residues. A phosphoserine mark is found at S252 and S259. T268 carries the post-translational modification Phosphothreonine; by autocatalysis. T269 is subject to Phosphothreonine; by PKA. The segment covering 275-285 (RMIEDAIRSHS) has biased composition (basic and acidic residues). The span at 286-301 (ESASPSALSSSPNNLS) shows a compositional bias: low complexity. Phosphoserine; by MAPK1 is present on residues S289, S296, and S301. An interaction with PEBP1/RKIP region spans residues 331–349 (RPRGQRDSSYYWEIEASEV). Position 338 is a phosphoserine; by PAK1, PAK2, PAK3 and PAK5 (S338). S339 is modified (phosphoserine; by PAK1, PAK2 and PAK3). Y340 and Y341 each carry phosphotyrosine; by SRC. A Protein kinase domain is found at 349-609 (VMLSTRIGSG…PQILSSIELL (261 aa)). Residues 355-363 (IGSGSFGTV) and K375 contribute to the ATP site. D468 serves as the catalytic Proton acceptor. The residue at position 471 (S471) is a Phosphoserine. T491 is subject to Phosphothreonine. The residue at position 494 (S494) is a Phosphoserine. S497 and S499 each carry phosphoserine; by PKC. R563 is modified (symmetric dimethylarginine; by PRMT5). Position 621 is a phosphoserine (S621). S642 bears the Phosphoserine; by MAPK1 mark.

It belongs to the protein kinase superfamily. TKL Ser/Thr protein kinase family. RAF subfamily. Monomer. Homodimer. Heterodimerizes with BRAF and this heterodimer possesses a highly increased kinase activity compared to the respective homodimers or monomers. Heterodimerization is mitogen-regulated and enhanced by 14-3-3 proteins. MAPK1/ERK2 activation can induce a negative feedback that promotes the dissociation of the heterodimer. Forms a multiprotein complex with Ras (M-Ras/MRAS), SHOC2 and protein phosphatase 1 (PPP1CA, PPP1CB and PPP1CC). Interacts with LZTR1. Interacts with Ras proteins; the interaction is antagonized by RIN1. Weakly interacts with RIT1. Interacts with STK3/MST2; the interaction inhibits its pro-apoptotic activity. Interacts (when phosphorylated at Ser-259) with YWHAZ (unphosphorylated at 'Thr-232'). Interacts with MAP3K5/ASF1 (via N-terminus) and this interaction inhibits the proapoptotic function of MAP3K5/ASK1. Interacts with PAK1 (via kinase domain). The phosphorylated form interacts with PIN1. The Ser-338 and Ser-339 phosphorylated form (by PAK1) interacts with BCL2. Interacts with PEBP1/RKIP and this interaction is enhanced if RAF1 is phosphorylated on residues Ser-338, Ser-339, Tyr-340 and Tyr-341. Interacts with ADCY2, ADCY5, ADCY6, DGKH, RCAN1/DSCR1, PPP1R12A, PKB/AKT1, PPP2CA, PPP2R1B, SPRY2, SPRY4, CNKSR1/CNK1, KSR2 and PHB/prohibitin. Interacts with ROCK2. Interacts (via N-terminus) with RGS14 (via RBD domains); the interaction mediates the formation of a ternary complex with BRAF, a ternary complex inhibited by GNAI1. Probably forms a complex composed of chaperones HSP90 and HSP70, co-chaperones CDC37, PPP5C, TSC1 and client protein TSC2, CDK4, AKT, RAF1 and NR3C1; this complex does not contain co-chaperones STIP1/HOP and PTGES3/p23. Interacts with MAP2K1/MEK1 and MAP2K2/MEK2. In its active form, interacts with PRMT5. Interacts with FAM83B; displaces 14-3-3 proteins from RAF1 and activates RAF1. Interacts with PDE8A; the interaction promotes RAF1 activity. Interacts with MFHAS1. Interacts with GLS. Interacts with YWHAZ. Interacts with NEK10 and MAP2K1; the interaction is direct with NEK10 and required for ERK1/2-signaling pathway activation in response to UV irradiation. It depends on Zn(2+) as a cofactor. In terms of processing, phosphorylation at Thr-269, Ser-338, Tyr-341, Thr-491 and Ser-494 results in its activation. Phosphorylation at Ser-29, Ser-43, Ser-289, Ser-296, Ser-301 and Ser-642 by MAPK1/ERK2 results in its inactivation. Phosphorylation at Ser-259 induces the interaction with YWHAZ and inactivates kinase activity. Dephosphorylation of Ser-259 by the SHOC2-MRAS-PP1c (SMP) complex consisting of SHOC2, GTP-bound M-Ras/MRAS and the catalytic subunit of protein phosphatase 1 (PPP1CA, PPP1CB or PPP1CC); this relieves inactivation and stimulates kinase activity. Phosphorylation at Ser-338 by PAK1 and PAK5 and Ser-339 by PAK1 is required for its mitochondrial localization. Phosphorylation at Ser-621 in response to growth factor treatment stabilizes the protein, possibly by preventing proteasomal degradation. Phosphorylation at Ser-289, Ser-296, Ser-301, Ser-338 and Ser-621 are somehow linked to the methylation potential of cells. Treatment of cells with HGF in the presence of the methylation inhibitor 5'-methylthioadenosine (MTA) results in increased phosphorylation at Ser-338 and Ser-621 and decreased phosphorylation at Ser-296, Ser-301 and Ser-338. Dephosphorylation at Ser-338 by PPP5C results in a decreased of activity. Methylated in response to EGF treatment. This modification leads to destabilization of the protein, possibly through proteasomal degradation.

It localises to the cytoplasm. The protein localises to the cell membrane. The protein resides in the mitochondrion. Its subcellular location is the nucleus. The enzyme catalyses L-seryl-[protein] + ATP = O-phospho-L-seryl-[protein] + ADP + H(+). The catalysed reaction is L-threonyl-[protein] + ATP = O-phospho-L-threonyl-[protein] + ADP + H(+). Regulation is a highly complex process involving membrane recruitment, protein-protein interactions, dimerization, and phosphorylation/dephosphorylation events. Ras-GTP recruits RAF1 to the membrane, thereby promoting its activation. The inactive conformation of RAF1 is maintained by autoinhibitory interactions occurring between the N-terminal regulatory and the C-terminal catalytic domains and by the binding of a 14-3-3 protein that contacts two phosphorylation sites, Ser-259 and Ser-621. Upon mitogenic stimulation, Ras and PPP2R1A cooperate to release autoinhibition and the subsequent phosphorylation of activating sites: Ser-338, Tyr-341, Thr-491, and Ser-494, yields a fully active kinase. Through a negative feedback mechanism involving MAPK1/ERK2, RAF1 is phosphorylated on Ser-29, Ser-43, Ser-289, Ser-296, Ser-301 and Ser-642 by MAPK1/ERK2, which yields an inactive, desensitized kinase. The signaling-competent conformation of RAF1 is finally re-established by the coordinated action of PIN1, a prolyl isomerase that converts pSer and pThr residues from the cis to the trans conformation, which is preferentially recognized and dephosphorylated by PPP2R1A. Activated by homodimerization and heterodimerization (with BRAF). Also regulated through association with other proteins such as KSR2, CNKSR1/CNK1, PEBP1/RKIP, PHB/prohibitin and SPRY4. PEBP1/RKIP acts by dissociating RAF1 from its substrates MAP2K1/MEK1 and MAP2K2/MEK2. PHB/prohibitin facilitates the displacement of 14-3-3 from RAF1 by activated Ras, thereby promoting cell membrane localization and phosphorylation of RAF1 at the activating Ser-338. SPRY4 inhibits Ras-independent, but not Ras-dependent, activation of RAF1. CNKSR1/CNK1 regulates Src-mediated RAF1 activation. Its function is as follows. Serine/threonine-protein kinase that acts as a regulatory link between the membrane-associated Ras GTPases and the MAPK/ERK cascade, and this critical regulatory link functions as a switch determining cell fate decisions including proliferation, differentiation, apoptosis, survival and oncogenic transformation. RAF1 activation initiates a mitogen-activated protein kinase (MAPK) cascade that comprises a sequential phosphorylation of the dual-specific MAPK kinases (MAP2K1/MEK1 and MAP2K2/MEK2) and the extracellular signal-regulated kinases (MAPK3/ERK1 and MAPK1/ERK2). The phosphorylated form of RAF1 (on residues Ser-338 and Ser-339, by PAK1) phosphorylates BAD/Bcl2-antagonist of cell death at 'Ser-75'. Phosphorylates adenylyl cyclases: ADCY2, ADCY5 and ADCY6, resulting in their activation. Phosphorylates PPP1R12A resulting in inhibition of the phosphatase activity. Can promote NF-kB activation and inhibit signal transducers involved in motility (ROCK2), apoptosis (MAP3K5/ASK1 and STK3/MST2), proliferation and angiogenesis (RB1). Can protect cells from apoptosis also by translocating to the mitochondria where it binds BCL2 and displaces BAD/Bcl2-antagonist of cell death. Regulates Rho signaling and migration, and is required for normal wound healing. Plays a role in the oncogenic transformation of epithelial cells via repression of the TJ protein, occludin (OCLN) by inducing the up-regulation of a transcriptional repressor SNAI2/SLUG, which induces down-regulation of OCLN. Restricts caspase activation in response to selected stimuli, notably Fas stimulation, pathogen-mediated macrophage apoptosis, and erythroid differentiation. Phosphorylates TNNT2/cardiac muscle troponin T. The sequence is that of RAF proto-oncogene serine/threonine-protein kinase (Raf1) from Rattus norvegicus (Rat).